Consider the following 91-residue polypeptide: Probable protein E5A (91 aa).

Belongs to the papillomaviridae E5A protein family.

The protein is Probable protein E5A of Human papillomavirus type 6b.